Consider the following 141-residue polypeptide: Cystatin (141 aa).

A signal peptide spans 1 to 26 (MVHSQLPVVALLRLLCALLLLPSATM). A Cystatin domain is found at 29–129 (GGLSPRSVTD…CRFQVWSRPW (101 aa)). A Secondary area of contact motif is present at residues 73–77 (QVVAG). Intrachain disulfides connect Cys91/Cys107 and Cys120/Cys140.

The protein belongs to the cystatin family. Expressed at a low level by the venom gland (at protein level).

It is found in the secreted. Its function is as follows. Inhibits various C1 cysteine proteases including cathepsin L, papain and cathepsin B. This protein has no toxic activity and its function in the venom is unknown. It may play a role as a housekeeping or regulatory protein. The protein is Cystatin of Notechis scutatus scutatus (Mainland tiger snake).